Here is a 55-residue protein sequence, read N- to C-terminus: uncharacterized protein (55 aa).

This is an uncharacterized protein from Acidianus hospitalis (AFV-1).